Here is a 208-residue protein sequence, read N- to C-terminus: Protein-L-isoaspartate O-methyltransferase (208 aa).

S59 is a catalytic residue.

The protein belongs to the methyltransferase superfamily. L-isoaspartyl/D-aspartyl protein methyltransferase family.

It localises to the cytoplasm. It catalyses the reaction [protein]-L-isoaspartate + S-adenosyl-L-methionine = [protein]-L-isoaspartate alpha-methyl ester + S-adenosyl-L-homocysteine. In terms of biological role, catalyzes the methyl esterification of L-isoaspartyl residues in peptides and proteins that result from spontaneous decomposition of normal L-aspartyl and L-asparaginyl residues. It plays a role in the repair and/or degradation of damaged proteins. The protein is Protein-L-isoaspartate O-methyltransferase of Escherichia coli O7:K1 (strain IAI39 / ExPEC).